A 503-amino-acid chain; its full sequence is Transcription termination/antitermination protein NusA (503 aa).

Residues 139 to 203 (GEIINGIVKR…KGPQIFLSRV (65 aa)) enclose the S1 motif domain. The 71-residue stretch at 308–378 (RHKVEVVVSQ…LDVEEVIGQL (71 aa)) folds into the KH domain.

The protein belongs to the NusA family. Monomer. Binds directly to the core enzyme of the DNA-dependent RNA polymerase and to nascent RNA.

Its subcellular location is the cytoplasm. Participates in both transcription termination and antitermination. In Rickettsia conorii (strain ATCC VR-613 / Malish 7), this protein is Transcription termination/antitermination protein NusA.